The chain runs to 185 residues: MANAIIETAKERFAQSHQSLSREYASIRAGRANASLLDRIQVDYYGAPTPLNQLASITVPEARVLLISPFDKSSIKDIERALNASDLGITPANDGSVIRLVIPALTEETRKELAKEVKKVGENAKIAIRNIRRDAMDDAKKQEKAKEITEDELKTLEKDIQKVTDDAIKEIDRMTAEKEKELLSV.

Belongs to the RRF family.

It localises to the cytoplasm. Functionally, responsible for the release of ribosomes from messenger RNA at the termination of protein biosynthesis. May increase the efficiency of translation by recycling ribosomes from one round of translation to another. This chain is Ribosome-recycling factor, found in Streptococcus pyogenes serotype M28 (strain MGAS6180).